The sequence spans 233 residues: Protein FAM204A (233 aa).

Residues 1–126 (MWSGLLPPGL…HSEPSSNETQ (126 aa)) are disordered. Acidic residues predominate over residues 13–24 (SDAESNSEDEAT). A compositionally biased stretch (basic and acidic residues) spans 39 to 58 (ESIRKTEIIDFSTDEPKTET). Basic residues predominate over residues 97–109 (FRGKRRKRSRKDK). A coiled-coil region spans residues 144-164 (VKRKKVEKSGLEKRIDQAVEE).

This Homo sapiens (Human) protein is Protein FAM204A (FAM204A).